A 490-amino-acid polypeptide reads, in one-letter code: Glutamate--tRNA ligase (490 aa).

A 'HIGH' region motif is present at residues 13 to 23 (PSPTGTPHVGL). Positions 257-261 (KLSKR) match the 'KMSKS' region motif. Residue Lys-260 coordinates ATP.

The protein belongs to the class-I aminoacyl-tRNA synthetase family. Glutamate--tRNA ligase type 1 subfamily. Monomer.

The protein localises to the cytoplasm. It catalyses the reaction tRNA(Glu) + L-glutamate + ATP = L-glutamyl-tRNA(Glu) + AMP + diphosphate. Its function is as follows. Catalyzes the attachment of glutamate to tRNA(Glu) in a two-step reaction: glutamate is first activated by ATP to form Glu-AMP and then transferred to the acceptor end of tRNA(Glu). The polypeptide is Glutamate--tRNA ligase (Mycobacterium bovis (strain BCG / Pasteur 1173P2)).